The following is a 379-amino-acid chain: Sensor histidine kinase YhcY (379 aa).

A Histidine kinase domain is found at 185-373; it reads RLAQELHDSV…KLSIRLPLKS (189 aa). H191 bears the Phosphohistidine; by autocatalysis mark.

It carries out the reaction ATP + protein L-histidine = ADP + protein N-phospho-L-histidine.. Its function is as follows. Member of the two-component regulatory system YhcY/YhcZ. Probably activates YhcZ by phosphorylation. The polypeptide is Sensor histidine kinase YhcY (yhcY) (Bacillus subtilis (strain 168)).